A 1124-amino-acid chain; its full sequence is FHF complex subunit HOOK-interacting protein 1B (1124 aa).

Disordered regions lie at residues 1–25, 461–542, 577–599, 713–732, and 838–900; these read MSWL…PSSP, APSG…QLSD, GENP…PSLS, KKVK…GMNG, and ERVR…PLGQ. The segment covering 509 to 532 has biased composition (low complexity); sequence ANPSSSGSENAPSSPRGSVSSPLS. A compositionally biased stretch (pro residues) spans 583-594; sequence NSAPLPPPPPTS. 2 stretches are compositionally biased toward basic and acidic residues: residues 838–858 and 875–884; these read ERVR…RESR and TEQRSSETKP.

It belongs to the FHIP family. Component of the FTS/Hook/FHIP complex (FHF complex), composed of AKTIP/FTS, FHIP1B, and one or more members of the Hook family of proteins HOOK1, HOOK2, and HOOK3. The FHF complex associates with the homotypic vesicular sorting complex (the HOPS complex).

Component of the FTS/Hook/FHIP complex (FHF complex). The FHF complex may function to promote vesicle trafficking and/or fusion via the homotypic vesicular protein sorting complex (the HOPS complex). FHF complex promotes the distribution of AP-4 complex to the perinuclear area of the cell. The chain is FHF complex subunit HOOK-interacting protein 1B (fhip1b) from Danio rerio (Zebrafish).